Reading from the N-terminus, the 345-residue chain is Tetraacyldisaccharide 4'-kinase (345 aa).

Position 61 to 68 (61 to 68 (TAGGTGKT)) interacts with ATP.

This sequence belongs to the LpxK family.

It catalyses the reaction a lipid A disaccharide + ATP = a lipid IVA + ADP + H(+). It functions in the pathway glycolipid biosynthesis; lipid IV(A) biosynthesis; lipid IV(A) from (3R)-3-hydroxytetradecanoyl-[acyl-carrier-protein] and UDP-N-acetyl-alpha-D-glucosamine: step 6/6. Its function is as follows. Transfers the gamma-phosphate of ATP to the 4'-position of a tetraacyldisaccharide 1-phosphate intermediate (termed DS-1-P) to form tetraacyldisaccharide 1,4'-bis-phosphate (lipid IVA). The polypeptide is Tetraacyldisaccharide 4'-kinase (Xanthomonas euvesicatoria pv. vesicatoria (strain 85-10) (Xanthomonas campestris pv. vesicatoria)).